A 403-amino-acid polypeptide reads, in one-letter code: Shaggy-related protein kinase GSK4 (403 aa).

A Protein kinase domain is found at 71–355 (YMAERVVGTG…ALEACAHSFF (285 aa)). ATP-binding positions include 77-85 (VGTGSFGVV) and K100. D196 (proton acceptor) is an active-site residue.

It belongs to the protein kinase superfamily. CMGC Ser/Thr protein kinase family. GSK-3 subfamily. In terms of assembly, interacts with LIC.

The catalysed reaction is L-seryl-[protein] + ATP = O-phospho-L-seryl-[protein] + ADP + H(+). The enzyme catalyses L-threonyl-[protein] + ATP = O-phospho-L-threonyl-[protein] + ADP + H(+). In terms of biological role, probable serine-threonine kinase that may regulate brassinosteroid signaling. The chain is Shaggy-related protein kinase GSK4 from Oryza sativa subsp. japonica (Rice).